Here is a 278-residue protein sequence, read N- to C-terminus: Large ribosomal subunit protein uL2c (278 aa).

Residues 224–267 (VVMNPVDHPHGGGEGRAPIGRKKPLTPWGHTALGGRSRKNHKYS) form a disordered region.

Belongs to the universal ribosomal protein uL2 family. As to quaternary structure, part of the 50S ribosomal subunit.

Its subcellular location is the plastid. The protein resides in the chloroplast. In Huperzia lucidula (Shining clubmoss), this protein is Large ribosomal subunit protein uL2c (rpl2).